The sequence spans 396 residues: MDKTTQVNQKTGLLSQPKAVWAVAFACVISFMGIGLVDPILPAIAAQLHASPSEVSLLFTSYLLVTGFMMFFSGAISSRIGAKWTLILGLIFIIVFAGLGGSSSSIAQLVGYRGGWGLGNALFISTALAVIVGVSVGGSAQAIILYEAALGLGISVGPLAGGELGSISWRAPFFGVSVLMFIALIAISFMLPKLPKPAKRVGVFDAMKALKYKGLLTMAVSAFLYNFGFFILLAYSPFVLDLDEHGLGYVFFGWGLLLAITSVFTAPLVHKALGTVRSLVVLFIAFAAILVIMGIWTDHQTLIITCIVVAGAVLGMVNTIMTTAVMGSAPVERSIASSAYSSVRFIGGALAPWIAGMLSEHFTASTPYTVGGIVVFVGMLVLLMGRKHLAGIKAGH.

12 consecutive transmembrane segments (helical) span residues 20–40 (VWAV…VDPI), 56–76 (SLLF…SGAI), 80–100 (IGAK…AGLG), 114–134 (GGWG…IVGV), 142–162 (AIIL…LAGG), 171–191 (APFF…SFML), 214–234 (GLLT…ILLA), 249–269 (YVFF…APLV), 278–298 (SLVV…IWTD), 301–321 (TLII…NTIM), 339–359 (AYSS…GMLS), and 364–384 (ASTP…VLLM).

It belongs to the major facilitator superfamily.

Its subcellular location is the cell membrane. Its function is as follows. Acts to efflux copper or a copper complex. It is possible that YfmO could contribute to copper resistance. The sequence is that of Multidrug efflux protein YfmO (yfmO) from Bacillus subtilis (strain 168).